The primary structure comprises 451 residues: Exodeoxyribonuclease 7 large subunit (451 aa).

Belongs to the XseA family. As to quaternary structure, heterooligomer composed of large and small subunits.

It localises to the cytoplasm. The catalysed reaction is Exonucleolytic cleavage in either 5'- to 3'- or 3'- to 5'-direction to yield nucleoside 5'-phosphates.. Its function is as follows. Bidirectionally degrades single-stranded DNA into large acid-insoluble oligonucleotides, which are then degraded further into small acid-soluble oligonucleotides. The protein is Exodeoxyribonuclease 7 large subunit of Thiobacillus denitrificans (strain ATCC 25259 / T1).